The chain runs to 428 residues: Cyclic AMP-responsive element-binding protein 3-like protein 3-B (428 aa).

Residues 1–286 (MDHYSDQGGD…VMNGSNKPVQ (286 aa)) lie on the Cytoplasmic side of the membrane. The span at 67-83 (VSGSPVWSPSPSDSGIS) shows a compositional bias: low complexity. The disordered stretch occupies residues 67–104 (VSGSPVWSPSPSDSGISEDPHSDHIDSPPPNASPPMEP). A compositionally biased stretch (pro residues) spans 93-103 (SPPPNASPPME). Residues 210-273 (ILKKIRRKIR…ISLMEQLRRL (64 aa)) enclose the bZIP domain. A basic motif region spans residues 212–241 (KKIRRKIRNKQSAQESRKKKKEYIDGLESR). The tract at residues 252–273 (LQRKVFQLEKCNISLMEQLRRL) is leucine-zipper. Residues 287–303 (AGTCVLVLLLSFTLILL) traverse the membrane as a helical; Signal-anchor for type II membrane protein segment. At 304 to 428 (PNLKPFTDTK…SRRSPHADDM (125 aa)) the chain is on the lumenal side. The segment at 381-428 (TEYDPESHNHSFDQHDEHHHGDPITGHVATVTLNPRRGSRRSPHADDM) is disordered. Over residues 385–402 (PESHNHSFDQHDEHHHGD) the composition is skewed to basic and acidic residues. N389 carries N-linked (GlcNAc...) asparagine glycosylation.

This sequence belongs to the bZIP family. ATF subfamily. Binds DNA as a dimer. Controlled by regulated intramembrane proteolysis (RIP). A fragment containing the cytoplasmic transcription factor domain is released by proteolysis. The cleavage seems to be performed sequentially by site-1 and site-2 proteases.

It is found in the endoplasmic reticulum membrane. It localises to the nucleus. Transcriptional activator. Binds the cAMP response element (CRE). Activates transcription through box-B element and CRE. Seems to function synergistically with atf6. Regulates FGF21 transcription. The sequence is that of Cyclic AMP-responsive element-binding protein 3-like protein 3-B (creb3l3b) from Danio rerio (Zebrafish).